The sequence spans 343 residues: Protein RecA (343 aa).

68-75 serves as a coordination point for ATP; it reads GPESSGKT.

The protein belongs to the RecA family.

It is found in the cytoplasm. Functionally, can catalyze the hydrolysis of ATP in the presence of single-stranded DNA, the ATP-dependent uptake of single-stranded DNA by duplex DNA, and the ATP-dependent hybridization of homologous single-stranded DNAs. It interacts with LexA causing its activation and leading to its autocatalytic cleavage. The protein is Protein RecA of Syntrophobacter fumaroxidans (strain DSM 10017 / MPOB).